Consider the following 254-residue polypeptide: Aspartate/glutamate leucyltransferase (254 aa).

Belongs to the R-transferase family. Bpt subfamily.

The protein localises to the cytoplasm. It carries out the reaction N-terminal L-glutamyl-[protein] + L-leucyl-tRNA(Leu) = N-terminal L-leucyl-L-glutamyl-[protein] + tRNA(Leu) + H(+). The enzyme catalyses N-terminal L-aspartyl-[protein] + L-leucyl-tRNA(Leu) = N-terminal L-leucyl-L-aspartyl-[protein] + tRNA(Leu) + H(+). In terms of biological role, functions in the N-end rule pathway of protein degradation where it conjugates Leu from its aminoacyl-tRNA to the N-termini of proteins containing an N-terminal aspartate or glutamate. This chain is Aspartate/glutamate leucyltransferase, found in Mesorhizobium japonicum (strain LMG 29417 / CECT 9101 / MAFF 303099) (Mesorhizobium loti (strain MAFF 303099)).